The chain runs to 426 residues: Pannexin-1 (426 aa).

At 1-40 the chain is on the cytoplasmic side; that stretch reads MAIAHLATEYVFSDFLLKEPTEPKFKGLRLELAVDKMVTC. Cysteine 40 bears the S-nitrosocysteine mark. The chain crosses the membrane as a helical span at residues 41-61; that stretch reads IAVGLPLLLISLAFAQEISIG. The Extracellular portion of the chain corresponds to 62 to 106; the sequence is TQISCFSPSSFSWRQAAFVDSYCWAAVQQKSSLQSESGNLPLWLH. 2 cysteine pairs are disulfide-bonded: cysteine 66-cysteine 264 and cysteine 84-cysteine 245. The helical transmembrane segment at 107–127 threads the bilayer; the sequence is KFFPYILLLFAILLYLPALFW. Residues 128–216 lie on the Cytoplasmic side of the membrane; the sequence is RFSAAPHLCS…HLIMKYISCR (89 aa). Phosphotyrosine is present on tyrosine 198. The helical transmembrane segment at 217 to 237 threads the bilayer; the sequence is LVTFVVILLACIYLSYYFSLS. Over 238-277 the chain is Extracellular; that stretch reads SLSDEFLCSIKSGVLKNDSTIPDRFQCKLIAVGIFQLLSL. Asparagine 254 carries N-linked (GlcNAc...) asparagine glycosylation. The helical transmembrane segment at 278-298 threads the bilayer; the sequence is INLIVYALLIPVVVYTFFIPF. Residues 299–426 lie on the Cytoplasmic side of the membrane; sequence RQKTDILKVY…SRQRLLNPSC (128 aa). S-nitrosocysteine is present on cysteine 346.

It belongs to the pannexin family. Homoheptameric. S-nitrosylation inhibits channel currents and ATP release. Post-translationally, N-glycosylation may play a role in cell surface targeting. Exists in three glycosylation states: non-glycosylated (GLY0), high-mannose glycosylated (GLY1), and fully mature glycosylated (GLY2). In terms of processing, phosphorylated at Tyr-198 by SRC. Phosphorylation activates ATP release. Constitutively phosphorylated in vascular smooth muscle cells. Cleaved by CASP3 and CASP7 during apoptosis. Cleavage opens the channel for the release of metabolites and induces plasma membrane permeability during apoptosis. Widely expressed, including in cartilage, skin, spleen and brain.

It localises to the cell membrane. The protein localises to the endoplasmic reticulum membrane. It carries out the reaction chloride(in) = chloride(out). The catalysed reaction is iodide(out) = iodide(in). It catalyses the reaction Ca(2+)(in) = Ca(2+)(out). The enzyme catalyses ATP(in) = ATP(out). It carries out the reaction K(+)(in) = K(+)(out). The catalysed reaction is Na(+)(in) = Na(+)(out). It catalyses the reaction nitrate(in) = nitrate(out). The enzyme catalyses L-aspartate(out) = L-aspartate(in). It carries out the reaction L-glutamate(out) = L-glutamate(in). The catalysed reaction is D-gluconate(in) = D-gluconate(out). It catalyses the reaction spermidine(in) = spermidine(out). In terms of biological role, ion channel involved in a variety of physiological functions such as blood pressure regulation, apoptotic cell clearance and oogenesis. Forms anion-selective channels with relatively low conductance and an order of permeabilities: nitrate&gt;iodide&gt;chlroride&gt;&gt;aspartate=glutamate=gluconate. Can release ATP upon activation through phosphorylation or cleavage at C-terminus. May play a role as a Ca(2+)-leak channel to regulate ER Ca(2+) homeostasis. Functionally, during apoptosis and after cleavage by caspases of the C-terminal tail, acts as a plasma membrane channel which mediates the regulated release of find-me signals, such as nucleotides ATP and UTP, and selective plasme membrane permeability. In Mus musculus (Mouse), this protein is Pannexin-1.